Consider the following 694-residue polypeptide: Elongation factor G (694 aa).

A tr-type G domain is found at 12 to 286 (SKLRNIGIMA…AVVDYLPSPI (275 aa)). GTP-binding positions include 21–28 (AHIDAGKT), 85–89 (DTPGH), and 139–142 (NKMD).

Belongs to the TRAFAC class translation factor GTPase superfamily. Classic translation factor GTPase family. EF-G/EF-2 subfamily.

The protein localises to the cytoplasm. Its function is as follows. Catalyzes the GTP-dependent ribosomal translocation step during translation elongation. During this step, the ribosome changes from the pre-translocational (PRE) to the post-translocational (POST) state as the newly formed A-site-bound peptidyl-tRNA and P-site-bound deacylated tRNA move to the P and E sites, respectively. Catalyzes the coordinated movement of the two tRNA molecules, the mRNA and conformational changes in the ribosome. This chain is Elongation factor G, found in Pseudothermotoga lettingae (strain ATCC BAA-301 / DSM 14385 / NBRC 107922 / TMO) (Thermotoga lettingae).